We begin with the raw amino-acid sequence, 285 residues long: Protease HtpX homolog (285 aa).

The next 2 membrane-spanning stretches (helical) occupy residues 7–27 (TAML…MIGG) and 30–50 (GMTI…WFSD). Histidine 131 serves as a coordination point for Zn(2+). Glutamate 132 is a catalytic residue. A Zn(2+)-binding site is contributed by histidine 135. 2 consecutive transmembrane segments (helical) span residues 146-166 (ITAT…FFGG) and 177-197 (IAGI…QMAI). Glutamate 202 contributes to the Zn(2+) binding site.

The protein belongs to the peptidase M48B family. Zn(2+) serves as cofactor.

It localises to the cell inner membrane. The protein is Protease HtpX homolog of Burkholderia multivorans (strain ATCC 17616 / 249).